Here is a 739-residue protein sequence, read N- to C-terminus: Nucleoprotein (739 aa).

Residues 334–363 adopt a coiled-coil conformation; that stretch reads VNVGEQYQQLREAATEAEKQLQQYAESREL. 2 disordered regions span residues 414–475 and 493–641; these read RPNL…YHDD and DDNK…DIGQ. Residues 531–546 are compositionally biased toward polar residues; it reads SDNNQQSADSEEQGGQ. Over residues 570-579 the composition is skewed to acidic residues; the sequence is TLMDQGDDDP. Positions 614–624 are enriched in basic and acidic residues; the sequence is AEAHEPPHKSS. The segment covering 625–634 has biased composition (polar residues); it reads NEPAETSQLN.

Belongs to the filoviruses nucleoprotein family. Homooligomer. Homomultimerizes to form the nucleocapsid. Binds to viral genomic RNA. Interacts with VP35 and VP30 to form the nucleocapsid. Interacts with host PPP2R5C; this interaction leads to VP30 dephosphorylation and viral transcription. Interacts with VP24; this interaction facilitates nucleocapsid assembly and genome packaging. Interacts with matrix protein VP40; this interaction allows recruitment of the nucleocapsid into progeny virions. Interacts with host STAU1. Interacts with host NXF1 (via RNA-binding domain); this interaction recruits NXF1 to the inclusion bodies were viral replication takes place, probably to export viral mRNA-NXF1 complexes from these sites. Interacts with host CCDC92; this interaction sequesters NP in the host cytoplasm. Interacts with host TRIM14. In terms of processing, phosphorylated and O-glycosylated by host. Acetylated by host EP300 in vitro.

It is found in the virion. The protein localises to the host cytoplasm. Its function is as follows. Oligomerizes into helical capsid to encapsidate the viral genome, protecting it from nucleases and the cellular innate immune response. VP35 binds to and stabilizes monomeric NP, keeping it soluble. Upon virus replication, NP is recruited to bind cooperatively viral genomic RNA and VP35 is released. The encapsidated genomic RNA is termed the nucleocapsid and serves as template for transcription and replication. The nucleocapsid is helical with a pitch of 10.81 NP per turn and a diameter of about 22nm. Each NP binds to six nucleotides of viral genomic RNA, three being exposed to the solvant and three hidden into the nucleocapsid. Also recruits host PPP2R5C phosphatase to dephosphorylate VP30 and thereby promote viral transcription. Upon virion assembly and budding, NP binds to VP24 and possibly host STAU1. In Reston ebolavirus (strain Reston-89) (REBOV), this protein is Nucleoprotein (NP).